Here is a 288-residue protein sequence, read N- to C-terminus: Energy-coupling factor transporter ATP-binding protein EcfA2 (288 aa).

The ABC transporter domain maps to 3–246 (IKLEQLGYCY…PDELVDLGLS (244 aa)). Residue 40–47 (GHTGSGKS) participates in ATP binding.

It belongs to the ABC transporter superfamily. Energy-coupling factor EcfA family. Forms a stable energy-coupling factor (ECF) transporter complex composed of 2 membrane-embedded substrate-binding proteins (S component), 2 ATP-binding proteins (A component) and 2 transmembrane proteins (T component).

Its subcellular location is the cell membrane. Functionally, ATP-binding (A) component of a common energy-coupling factor (ECF) ABC-transporter complex. Unlike classic ABC transporters this ECF transporter provides the energy necessary to transport a number of different substrates. The polypeptide is Energy-coupling factor transporter ATP-binding protein EcfA2 (Listeria monocytogenes serovar 1/2a (strain ATCC BAA-679 / EGD-e)).